A 500-amino-acid chain; its full sequence is NAD(P)H-quinone oxidoreductase chain 4, chloroplastic (500 aa).

14 consecutive transmembrane segments (helical) span residues 4 to 24 (FPWL…MLFL), 35 to 55 (YTIC…CYNF), 87 to 107 (IGTI…AFPV), 113 to 130 (LFHF…GSFS), 134 to 154 (LLLF…LLSM), 167 to 187 (FILY…GISL), 211 to 231 (IILY…IPLH), 242 to 262 (HYST…YGLV), 272 to 292 (AHSL…IYAA), 305 to 325 (IAYS…SITD), 330 to 350 (GAIL…FLAG), 386 to 406 (LALP…GIIT), 416 to 436 (IFII…LLSM), and 462 to 482 (LFLS…PDFV).

It belongs to the complex I subunit 4 family.

The protein localises to the plastid. The protein resides in the chloroplast thylakoid membrane. The catalysed reaction is a plastoquinone + NADH + (n+1) H(+)(in) = a plastoquinol + NAD(+) + n H(+)(out). It catalyses the reaction a plastoquinone + NADPH + (n+1) H(+)(in) = a plastoquinol + NADP(+) + n H(+)(out). In Aethionema cordifolium (Lebanon stonecress), this protein is NAD(P)H-quinone oxidoreductase chain 4, chloroplastic.